Reading from the N-terminus, the 207-residue chain is FMN-dependent NADH:quinone oxidoreductase (207 aa).

Position 10 (Ser10) interacts with FMN.

It belongs to the azoreductase type 1 family. As to quaternary structure, homodimer. The cofactor is FMN.

The catalysed reaction is 2 a quinone + NADH + H(+) = 2 a 1,4-benzosemiquinone + NAD(+). The enzyme catalyses N,N-dimethyl-1,4-phenylenediamine + anthranilate + 2 NAD(+) = 2-(4-dimethylaminophenyl)diazenylbenzoate + 2 NADH + 2 H(+). Its function is as follows. Quinone reductase that provides resistance to thiol-specific stress caused by electrophilic quinones. Also exhibits azoreductase activity. Catalyzes the reductive cleavage of the azo bond in aromatic azo compounds to the corresponding amines. The polypeptide is FMN-dependent NADH:quinone oxidoreductase (Shouchella clausii (strain KSM-K16) (Alkalihalobacillus clausii)).